Reading from the N-terminus, the 260-residue chain is MTQLSVNVNKIATLRNSRGGSLPSVLKLSELILDSGAHGITVHPRSDERHITKQDVFELQEFLRTYNEKITKLGISKKEYNIEGEPSERFLDLVLKAKPDQATLVPVKPGEITSDHGFQFADQKTFSTLKPIVEAIRKEGIRVSLFMETDFTFYDQVVALGAERIELYTGPFAHAFDLSEEKGKEIFTDYQRAAIEANKLGLAVNAGHDLDTNNLRVFAKLPYLKEVSIGHRLMAQSLVDGLETTVKSYLKVLSLGNETE.

2 residues coordinate 3-amino-2-oxopropyl phosphate: Asn7 and Arg18. The Proton acceptor role is filled by His43. Arg45 and His50 together coordinate 1-deoxy-D-xylulose 5-phosphate. The Proton acceptor role is filled by Glu83. Thr113 lines the 1-deoxy-D-xylulose 5-phosphate pocket. The Proton donor role is filled by His208. 3-amino-2-oxopropyl phosphate contacts are provided by residues Asp209 and 230–231 (GH).

It belongs to the PNP synthase family. As to quaternary structure, homooctamer; tetramer of dimers.

It localises to the cytoplasm. The catalysed reaction is 3-amino-2-oxopropyl phosphate + 1-deoxy-D-xylulose 5-phosphate = pyridoxine 5'-phosphate + phosphate + 2 H2O + H(+). It functions in the pathway cofactor biosynthesis; pyridoxine 5'-phosphate biosynthesis; pyridoxine 5'-phosphate from D-erythrose 4-phosphate: step 5/5. Its function is as follows. Catalyzes the complicated ring closure reaction between the two acyclic compounds 1-deoxy-D-xylulose-5-phosphate (DXP) and 3-amino-2-oxopropyl phosphate (1-amino-acetone-3-phosphate or AAP) to form pyridoxine 5'-phosphate (PNP) and inorganic phosphate. This chain is Pyridoxine 5'-phosphate synthase, found in Leptospira biflexa serovar Patoc (strain Patoc 1 / Ames).